Consider the following 393-residue polypeptide: Putative bacilysin exporter BacE (393 aa).

10 helical membrane-spanning segments follow: residues 11 to 31 (LLFG…ALLI), 43 to 63 (SGVI…GVLV), 69 to 89 (VKIM…LTFL), 92 to 112 (GEYP…GVFF), 133 to 155 (LFAK…FLLG), 160 to 177 (LAVA…FFIS), 215 to 235 (MFTM…FPIV), 244 to 264 (IGNF…AALV), 287 to 307 (ALFL…LFFI), and 353 to 373 (IVDA…LFLH).

It belongs to the major facilitator superfamily.

Its subcellular location is the cell membrane. In terms of biological role, part of the bacilysin biosynthesis operon. May be involved in self-resistance to bacilysin by permitting efflux of this antibiotic. The chain is Putative bacilysin exporter BacE (bacE) from Bacillus subtilis.